A 344-amino-acid chain; its full sequence is Lipopolysaccharide heptosyltransferase 3 (344 aa).

Belongs to the glycosyltransferase 9 family.

It catalyses the reaction an L-alpha-D-Hep-(1-&gt;3)-4-O-phospho-L-alpha-D-Hep-(1-&gt;5)-[alpha-Kdo-(2-&gt;4)]-alpha-Kdo-(2-&gt;6)-lipid A + ADP-L-glycero-beta-D-manno-heptose = an L-alpha-D-Hep-(1-&gt;7)-L-alpha-D-Hep-(1-&gt;3)-4-O-phospho-L-alpha-D-Hep-(1-&gt;5)-[alpha-Kdo-(2-&gt;4)]-alpha-Kdo-(2-&gt;6)-lipid A + ADP + H(+). The catalysed reaction is L-alpha-D-Hep-(1-&gt;3)-4-O-phospho-L-alpha-D-Hep-(1-&gt;5)-[alpha-Kdo-(2-&gt;4)]-alpha-Kdo-(2-&gt;6)-lipid A (E. coli) + ADP-L-glycero-beta-D-manno-heptose = L-alpha-D-Hep-(1-&gt;7)-L-alpha-D-Hep-(1-&gt;3)-4-O-phospho-L-alpha-D-Hep-(1-&gt;5)-[alpha-Kdo-(2-&gt;4)]-alpha-Kdo-(2-&gt;6)-lipid A (E. coli) + ADP + H(+). It functions in the pathway bacterial outer membrane biogenesis; LPS core biosynthesis. Its function is as follows. Glycosyltransferase involved in the biosynthesis of the core oligosaccharide region of lipopolysaccharide (LPS). Catalyzes the addition of the third heptose unit (HepIII) to the second heptose unit (HepII) of the phospho-Hep2-Kdo2-lipid A module. In Escherichia coli (strain K12), this protein is Lipopolysaccharide heptosyltransferase 3.